We begin with the raw amino-acid sequence, 558 residues long: NAD-dependent malic enzyme 2 (558 aa).

Y101 acts as the Proton donor in catalysis. R154 contributes to the NAD(+) binding site. The active-site Proton acceptor is the K172. The a divalent metal cation site is built by E243, D244, and D267. NAD(+) contacts are provided by D267 and N411.

This sequence belongs to the malic enzymes family. In terms of assembly, homotetramer. Mg(2+) serves as cofactor. The cofactor is Mn(2+).

The enzyme catalyses (S)-malate + NAD(+) = pyruvate + CO2 + NADH. It catalyses the reaction oxaloacetate + H(+) = pyruvate + CO2. This chain is NAD-dependent malic enzyme 2, found in Photobacterium profundum (strain SS9).